A 470-amino-acid polypeptide reads, in one-letter code: Type II NADH:quinone oxidoreductase NdhA (470 aa).

FAD contacts are provided by residues 21–25 (GSGFG) and Val-89. Residue Glu-184 is part of the active site. FAD-binding positions include Asp-323 and 334–335 (AQ). A helical transmembrane segment spans residues 389-409 (FAGYFAWLAWLVLHLVYLVGY).

This sequence belongs to the NADH dehydrogenase family. FAD is required as a cofactor.

Its subcellular location is the cell inner membrane. It catalyses the reaction a quinone + NADH + H(+) = a quinol + NAD(+). The catalysed reaction is a menaquinone + NADH + H(+) = a menaquinol + NAD(+). Its activity is regulated as follows. Inhibited by phenothiazine analogs. In terms of biological role, alternative, nonproton pumping NADH:quinone oxidoreductase that delivers electrons to the respiratory chain by oxidation of NADH and reduction of quinones. The polypeptide is Type II NADH:quinone oxidoreductase NdhA (Mycobacterium tuberculosis (strain ATCC 25618 / H37Rv)).